Reading from the N-terminus, the 250-residue chain is Ubiquinone/menaquinone biosynthesis C-methyltransferase UbiE (250 aa).

S-adenosyl-L-methionine is bound by residues threonine 73, aspartate 94, and 122–123; that span reads DA.

The protein belongs to the class I-like SAM-binding methyltransferase superfamily. MenG/UbiE family.

The enzyme catalyses a 2-demethylmenaquinol + S-adenosyl-L-methionine = a menaquinol + S-adenosyl-L-homocysteine + H(+). It catalyses the reaction a 2-methoxy-6-(all-trans-polyprenyl)benzene-1,4-diol + S-adenosyl-L-methionine = a 5-methoxy-2-methyl-3-(all-trans-polyprenyl)benzene-1,4-diol + S-adenosyl-L-homocysteine + H(+). Its pathway is quinol/quinone metabolism; menaquinone biosynthesis; menaquinol from 1,4-dihydroxy-2-naphthoate: step 2/2. It functions in the pathway cofactor biosynthesis; ubiquinone biosynthesis. Functionally, methyltransferase required for the conversion of demethylmenaquinol (DMKH2) to menaquinol (MKH2) and the conversion of 2-polyprenyl-6-methoxy-1,4-benzoquinol (DDMQH2) to 2-polyprenyl-3-methyl-6-methoxy-1,4-benzoquinol (DMQH2). The polypeptide is Ubiquinone/menaquinone biosynthesis C-methyltransferase UbiE (Coxiella burnetii (strain CbuK_Q154) (Coxiella burnetii (strain Q154))).